A 284-amino-acid polypeptide reads, in one-letter code: Serine protease 57 (284 aa).

A signal peptide spans 1 to 35 (MPSSTAMVPGTRGGWHCLVLTTAAALTQLMWLPGC). The Peptidase S1 domain occupies 40 to 269 (IVGGHEVTPH…FVTWIWDVVR (230 aa)). An intrachain disulfide couples Cys65 to Cys81. Catalysis depends on charge relay system residues His80 and Asp128. An N-linked (GlcNAc...) asparagine glycan is attached at Asn135. Cystine bridges form between Cys163–Cys230, Cys194–Cys208, and Cys220–Cys245. Ser224 serves as the catalytic Charge relay system.

Belongs to the peptidase S1 family. Post-translationally, after cleavage of the signal peptide, the N-terminus is probably further processed by CTSC. Processing by CTSC is probably required for accumulation in cytoplasmic granules; in the absence of CTSC the protein does not accumulate. N-glycosylated.

The protein localises to the cytoplasmic granule lumen. The protein resides in the secreted. Functionally, serine protease that cleaves preferentially after Arg residues. Can also cleave after citrulline (deimidated arginine) and methylarginine residues. This chain is Serine protease 57 (Prss57), found in Mus musculus (Mouse).